The following is a 24-amino-acid chain: Snake venom metalloproteinase Batx-1 (24 aa).

The Peptidase M12B domain occupies Tyr-1 to Arg-24. Glu-3 lines the Ca(2+) pocket.

It belongs to the venom metalloproteinase (M12B) family. P-I subfamily. In terms of assembly, monomer. The cofactor is Zn(2+). Post-translationally, the N-terminus is blocked. In terms of processing, contains 3 disulfide bonds. In terms of tissue distribution, expressed by the venom gland.

Its subcellular location is the secreted. Inhibited by EDTA, and o-phenanthroline, but not inhibited by PMSF, pepstatin A, and aprotinin. In terms of biological role, zinc metalloproteinase that exhits a weak hemorrhagic activity. Degrades preferentially the Aalpha- (FGA) and Bbeta-chains (FGB) of fibrinogen, and partially degrades gamma-chain (FGG) at higher concentration. Induces a mild myotoxicity, but lacks coagulant activity on human plasma or bovin fibrinogen and defibrinating activity. The chain is Snake venom metalloproteinase Batx-1 from Bothrops atrox (Barba amarilla).